We begin with the raw amino-acid sequence, 501 residues long: MCQVEEDYNGLECNQEKIPVSGLNRKCMKCKEGTAVLIIRVSDAFCRSCFKEYFIHKFRAMLGKNRVIFPQEKVLLAVSGGAASCTMLSQVQEGLSRDAPKKLRFMPGIVYIDDGGACGRSEDERQTSISQLKNIFTQTGFPYFIVPLEKVFSLPTSVLVPGTSDPDPSNPCYKQAVDKYLKEKQKLREEEAVCAVAQLNLEDSAYLPEHKLALQRLFSSLKTLSAKQEMLQTLRQHLILHVARENSYSKVMMGESCSRLAVKLLSNIALGRGAALASDTGFSDPRFGDVVIVRPMRDYSSKEITFYNRMFHVPSVFIPGLDTKSHDKASIQRLTESFVTNLQADFPSTVSTIYRTSEKLHTVRPPQSQSTEPEPASKCLLCLCALDTTADKASAFHATLISEQLSQLRLQEGSVDLVAGSSDQCCVEDQTCGTSGCCSSKRTPVQQDLKTLLCYSCRLTVKDMAAVNTLPPYILTEAEKRQRRSQMKVEISEYLLEEDQD.

This sequence belongs to the CTU2/NCS2 family.

It is found in the cytoplasm. Its pathway is tRNA modification; 5-methoxycarbonylmethyl-2-thiouridine-tRNA biosynthesis. Functionally, plays a central role in 2-thiolation of mcm(5)S(2)U at tRNA wobble positions of tRNA(Lys), tRNA(Glu) and tRNA(Gln). May act by forming a heterodimer with ctu1/atpbd3 that ligates sulfur from thiocarboxylated urm1 onto the uridine of tRNAs at wobble position. The sequence is that of Cytoplasmic tRNA 2-thiolation protein 2 (ctu2) from Danio rerio (Zebrafish).